The chain runs to 351 residues: Photosystem II D2 protein (351 aa).

A helical transmembrane segment spans residues 39–59 (TAYLAIGGWLTGTTFVTSWYT). Residue His-116 coordinates chlorophyll a. A helical transmembrane segment spans residues 123-139 (GFMLRQFEIARLVGIRP). Pheophytin a-binding residues include Gln-128 and Asn-141. The chain crosses the membrane as a helical span at residues 151–164 (VFVSVFLMYPLGQS). His-196 serves as a coordination point for chlorophyll a. Residues 206–226 (GALLCAIHGATVENTLFEDGE) form a helical membrane-spanning segment. A plastoquinone is bound by residues His-213 and Phe-260. A Fe cation-binding site is contributed by His-213. Position 267 (His-267) interacts with Fe cation. Residues 277-293 (GLWTSSIGIIGLALNLR) traverse the membrane as a helical segment.

This sequence belongs to the reaction center PufL/M/PsbA/D family. In terms of assembly, PSII is composed of 1 copy each of membrane proteins PsbA, PsbB, PsbC, PsbD, PsbE, PsbF, PsbH, PsbI, PsbJ, PsbK, PsbL, PsbM, PsbT, PsbX, PsbY, PsbZ, Psb30/Ycf12, peripheral proteins PsbO, CyanoQ (PsbQ), PsbU, PsbV and a large number of cofactors. It forms dimeric complexes. The D1/D2 heterodimer binds P680, chlorophylls that are the primary electron donor of PSII, and subsequent electron acceptors. It shares a non-heme iron and each subunit binds pheophytin, quinone, additional chlorophylls, carotenoids and lipids. There is also a Cl(-1) ion associated with D1 and D2, which is required for oxygen evolution. The PSII complex binds additional chlorophylls, carotenoids and specific lipids. is required as a cofactor.

The protein resides in the cellular thylakoid membrane. It carries out the reaction 2 a plastoquinone + 4 hnu + 2 H2O = 2 a plastoquinol + O2. Functionally, photosystem II (PSII) is a light-driven water:plastoquinone oxidoreductase that uses light energy to abstract electrons from H(2)O, generating O(2) and a proton gradient subsequently used for ATP formation. It consists of a core antenna complex that captures photons, and an electron transfer chain that converts photonic excitation into a charge separation. The D1/D2 (PsbA/PsbD) reaction center heterodimer binds P680, the primary electron donor of PSII as well as several subsequent electron acceptors. D2 is needed for assembly of a stable PSII complex. The polypeptide is Photosystem II D2 protein (Parasynechococcus marenigrum (strain WH8102)).